A 152-amino-acid polypeptide reads, in one-letter code: Small ribosomal subunit protein uS13 (152 aa).

The protein belongs to the universal ribosomal protein uS13 family. Component of the small ribosomal subunit.

The protein localises to the cytoplasm. Component of the small ribosomal subunit. The ribosome is a large ribonucleoprotein complex responsible for the synthesis of proteins in the cell. The protein is Small ribosomal subunit protein uS13 (rps18) of Ictalurus punctatus (Channel catfish).